Reading from the N-terminus, the 605-residue chain is MKTPEDPGSPKQHEVVDSAGTSTRDRQAPLPTEPKFDMLYKIEDVPPWYLCILLGFQHYLTCFSGTIAVPFLLAEALCVGRDQHMVSQLIGTIFTCVGITTLIQTTVGIRLPLFQASAFAFLVPAKSILALERWKCPSEEEIYGNWSMPLNTSHIWHPRIREVQGAIMVSSMVEVVIGLMGLPGALLSYIGPLTVTPTVSLIGLSVFQAAGDRAGSHWGISACSILLIVLFSQYLRNLTFLLPVYRWGKGLTLFRVQIFKMFPIVLAIMTVWLLCYVLTLTDVLPADPTVYGFQARTDARGDIMAISPWIRIPYPCQWGLPTVTVAAVLGMFSATLAGIIESIGDYYACARLAGAPPPPVHAINRGIFTEGICCIIAGLLGTGNGSTSSSPNIGVLGITKVGSRRVVQYGAGIMLILGAIGKFTALFASLPDPILGGMFCTLFGMITAVGLSNLQFVDMNSSRNLFVLGFSMFFGLTLPNYLDSNPGAINTGIPEVDQILTVLLTTEMFVGGCLAFILDNTVPGSPEERGLIQWKAGAHANSETSASLKSYDFPFGMGMVKRTTFFRYIPICPVFRGFSKKTQNQPPVLEDTPDNIETGSVCTKV.

The segment at 1–30 (MKTPEDPGSPKQHEVVDSAGTSTRDRQAPL) is disordered. The Cytoplasmic portion of the chain corresponds to 1–59 (MKTPEDPGSPKQHEVVDSAGTSTRDRQAPLPTEPKFDMLYKIEDVPPWYLCILLGFQHY). A helical membrane pass occupies residues 60–80 (LTCFSGTIAVPFLLAEALCVG). Topologically, residues 81–88 (RDQHMVSQ) are extracellular. The chain crosses the membrane as a helical span at residues 89 to 109 (LIGTIFTCVGITTLIQTTVGI). Residue Arg110 is a topological domain, cytoplasmic. A helical membrane pass occupies residues 111–131 (LPLFQASAFAFLVPAKSILAL). Residues 132–166 (ERWKCPSEEEIYGNWSMPLNTSHIWHPRIREVQGA) lie on the Extracellular side of the membrane. 2 N-linked (GlcNAc...) asparagine glycosylation sites follow: Asn145 and Asn151. A helical transmembrane segment spans residues 167-187 (IMVSSMVEVVIGLMGLPGALL). Residues 188 to 214 (SYIGPLTVTPTVSLIGLSVFQAAGDRA) are Cytoplasmic-facing. A helical membrane pass occupies residues 215 to 232 (GSHWGISACSILLIVLFS). Residues 233–236 (QYLR) are Extracellular-facing. The helical intramembrane region spans 237 to 250 (NLTFLLPVYRWGKG). The Extracellular portion of the chain corresponds to 251 to 257 (LTLFRVQ). The helical transmembrane segment at 258–278 (IFKMFPIVLAIMTVWLLCYVL) threads the bilayer. Residues 279–319 (TLTDVLPADPTVYGFQARTDARGDIMAISPWIRIPYPCQWG) are Cytoplasmic-facing. Residues 320–340 (LPTVTVAAVLGMFSATLAGII) form a helical membrane-spanning segment. The Extracellular segment spans residues 341-365 (ESIGDYYACARLAGAPPPPVHAINR). The chain crosses the membrane as a helical span at residues 366–386 (GIFTEGICCIIAGLLGTGNGS). The Cytoplasmic segment spans residues 387–409 (TSSSPNIGVLGITKVGSRRVVQY). A helical membrane pass occupies residues 410–430 (GAGIMLILGAIGKFTALFASL). Residues 431 to 433 (PDP) lie on the Extracellular side of the membrane. Residues 434–454 (ILGGMFCTLFGMITAVGLSNL) form a helical membrane-spanning segment. Topologically, residues 455 to 464 (QFVDMNSSRN) are cytoplasmic. A helical membrane pass occupies residues 465–485 (LFVLGFSMFFGLTLPNYLDSN). At 486–497 (PGAINTGIPEVD) the chain is on the extracellular side. Residues 498 to 518 (QILTVLLTTEMFVGGCLAFIL) form a helical membrane-spanning segment. Topologically, residues 519–605 (DNTVPGSPEE…IETGSVCTKV (87 aa)) are cytoplasmic. Thr598 carries the phosphothreonine modification. Ser600 bears the Phosphoserine mark. A Phosphothreonine modification is found at Thr603.

It belongs to the nucleobase:cation symporter-2 (NCS2) (TC 2.A.40) family. In terms of processing, phosphorylated. As to expression, expressed in kidney (at protein level).

The protein resides in the cell membrane. It catalyses the reaction L-ascorbate(out) + 2 Na(+)(out) = L-ascorbate(in) + 2 Na(+)(in). The catalysed reaction is urate(out) + 2 Na(+)(out) = urate(in) + 2 Na(+)(in). In terms of biological role, sodium:L-ascorbate cotransporter. Mediates electrogenic uptake of vitamin C, with a stoichiometry of 2 Na(+) for each L-ascorbate. Has retained some ancestral activity toward nucleobases such as urate, an oxidized purine. Low-affinity high-capacity sodium:urate cotransporter, may regulate serum urate levels by serving as a renal urate re-absorber. The sequence is that of Solute carrier family 23 member 1 (Slc23a1) from Mus musculus (Mouse).